The primary structure comprises 163 residues: Nucleotide-binding protein Spro_1084 (163 aa).

The protein belongs to the YajQ family.

Its function is as follows. Nucleotide-binding protein. The sequence is that of Nucleotide-binding protein Spro_1084 from Serratia proteamaculans (strain 568).